A 275-amino-acid chain; its full sequence is MATELEYESVLCVKPDVSVYRIPPRASNRGYRASDWKLDQPDWTGRLRITSKGKTAYIKLEDKVSGELFAQAPVEQYPGIAVETVTDSSRYFVIRIQDGTGRSAFIGIGFTDRGDAFDFNVSLQDHFKWVKQESEISKESQEMDARPKLDLGFKEGQTIKLCIGNITNKKGGASKPRTARGGGLSLLPPPPGGKVTIPPPSSSVAISNHVTPPPIPKSNHGGSDADILLDLDSPAPVTTPAPTPVSVSNDLWGDFSTASSSVPNQAPQPSNWVQF.

The tract at residues 170-191 (KGGASKPRTARGGGLSLLPPPP) is disordered. The residue at position 180 (Arg180) is an Omega-N-methylarginine. Thr211 carries the phosphothreonine modification. 2 short sequence motifs (WXXF motif) span residues 252 to 255 (WGDF) and 272 to 275 (WVQF). The interval 254–275 (DFSTASSSVPNQAPQPSNWVQF) is disordered. Positions 256 to 275 (STASSSVPNQAPQPSNWVQF) are enriched in polar residues.

It belongs to the NECAP family. As to quaternary structure, interacts with AP1G1 and AP2A1 components of the adapter protein complexes AP-1 and AP-2. Interacts with the GAE domain proteins GGA1, GGA2 and GGA3.

It localises to the cytoplasmic vesicle. It is found in the clathrin-coated vesicle membrane. The protein localises to the cell membrane. Involved in endocytosis. This is Adaptin ear-binding coat-associated protein 1 (NECAP1) from Homo sapiens (Human).